Reading from the N-terminus, the 96-residue chain is uncharacterized protein (96 aa).

Positions 1–19 (MKQIIPALITLSFSPMAIA) are cleaved as a signal peptide.

This is an uncharacterized protein from Synechocystis sp. (strain ATCC 27184 / PCC 6803 / Kazusa).